The primary structure comprises 285 residues: uncharacterized protein (285 aa).

Disordered regions lie at residues 115–139 (AAGK…QERN) and 152–183 (EHDV…NRGV). 2 stretches are compositionally biased toward basic and acidic residues: residues 128 to 138 (KEADVQTKQER) and 152 to 170 (EHDV…DLKT).

This is an uncharacterized protein from Escherichia coli (strain K12).